The primary structure comprises 422 residues: Interleukin-11 receptor subunit alpha (422 aa).

An N-terminal signal peptide occupies residues 1 to 22 (MSSSCSGLSRVLVAVATALVSA). At 24–370 (SPCPQAWGPP…DSVEQVAVLA (347 aa)) the chain is on the extracellular side. The Ig-like C2-type domain maps to 27-110 (PQAWGPPGVQ…LGGTVTLQLG (84 aa)). Cystine bridges form between Cys-48–Cys-94, Cys-120–Cys-130, and Cys-170–Cys-180. Fibronectin type-III domains are found at residues 112–219 (PPAR…LRPD) and 220–317 (PPQG…TPST). Asn-127 carries N-linked (GlcNAc...) asparagine glycosylation. N-linked (GlcNAc...) asparagine glycosylation occurs at Asn-194. The WSXWS motif signature appears at 304–308 (WSTWS). Positions 335-355 (EVEPQVDSPAPPRPSLQPHPR) are disordered. The helical transmembrane segment at 371 to 391 (SLGILSFLGLVAGALALGLWL) threads the bilayer. Over 392–422 (RLRRGGKDGSPKPGFLASVIPVDRRPGAPNL) the chain is Cytoplasmic. The segment at 398–422 (KDGSPKPGFLASVIPVDRRPGAPNL) is disordered. Over residues 413–422 (VDRRPGAPNL) the composition is skewed to basic and acidic residues.

This sequence belongs to the type I cytokine receptor family. Type 3 subfamily. On IL11 binding, forms a multimer complex with IL6ST/gp130. In terms of processing, a short soluble form is also released from the membrane by proteolysis. The sIL11RA is formed either by limited proteolysis of membrane-bound receptors, a process referred to as ectodomain shedding, or directly secreted from the cells after alternative mRNA splicing. mIL11RA is cleaved by the proteases ADAM10, ELANE and PRTN3. Expressed in a number of cell lines, including the myelogenous leukemia cell line K-562, the megakaryocytic leukemia cell line M-07e, the erythroleukemia cell line TF-1, and the osteosarcoma cell lines, MG-63 and SaOS-2. Also expressed in normal and malignant prostate epithelial cell lines. Expression levels are increased in prostate carcinoma.

Its subcellular location is the membrane. The protein localises to the secreted. Functionally, receptor for interleukin-11 (IL11). The receptor systems for IL6, LIF, OSM, CNTF, IL11 and CT1 can utilize IL6ST for initiating signal transmission. The IL11/IL11RA/IL6ST complex may be involved in the control of proliferation and/or differentiation of skeletogenic progenitor or other mesenchymal cells. Essential for the normal development of craniofacial bones and teeth. Restricts suture fusion and tooth number. Soluble form of IL11 receptor (sIL11RA) that acts as an agonist of IL11 activity. The IL11:sIL11RA complex binds to IL6ST/gp130 on cell surfaces and induces signaling also on cells that do not express membrane-bound IL11RA in a process called IL11 trans-signaling. The polypeptide is Interleukin-11 receptor subunit alpha (Homo sapiens (Human)).